The following is a 330-amino-acid chain: Mas-related G-protein coupled receptor member X2 (330 aa).

Over methionine 1–leucine 33 the chain is Extracellular. A helical transmembrane segment spans residues valine 34 to leucine 54. Residues leucine 55–alanine 63 are Cytoplasmic-facing. Residues phenylalanine 64 to isoleucine 84 form a helical membrane-spanning segment. Over asparagine 85–serine 96 the chain is Extracellular. Residues isoleucine 97 to leucine 117 traverse the membrane as a helical segment. Residues serine 118–histidine 144 are Cytoplasmic-facing. Residues leucine 145–glycine 165 form a helical membrane-spanning segment. Residues lysine 166 to aspartate 184 lie on the Extracellular side of the membrane. The chain crosses the membrane as a helical span at residues phenylalanine 185 to leucine 205. At leucine 206–threonine 228 the chain is on the cytoplasmic side. A helical transmembrane segment spans residues valine 229–isoleucine 249. At tryptophan 250 to serine 264 the chain is on the extracellular side. Residues valine 265–phenylalanine 285 traverse the membrane as a helical segment. At arginine 286–valine 330 the chain is on the cytoplasmic side.

The protein belongs to the G-protein coupled receptor 1 family. Mas subfamily.

It is found in the cell membrane. Mast cell-specific receptor for basic secretagogues, i.e. cationic amphiphilic drugs, as well as endo- or exogenous peptides, consisting of a basic head group and a hydrophobic core. Recognizes and binds small molecules containing a cyclized tetrahydroisoquinoline (THIQ), such as non-steroidal neuromuscular blocking drugs (NMBDs), including tubocurarine and atracurium. In response to these compounds, mediates pseudo-allergic reactions characterized by histamine release, inflammation and airway contraction. The polypeptide is Mas-related G-protein coupled receptor member X2 (MRGPRX2) (Trachypithecus francoisi (Francois' leaf monkey)).